A 444-amino-acid chain; its full sequence is Acyl-CoA (8-3)-desaturase (444 aa).

Met1 carries the post-translational modification N-acetylmethionine. Topologically, residues 1 to 121 (MAPDPVAAET…FRELRATVER (121 aa)) are cytoplasmic. The Cytochrome b5 heme-binding domain maps to 17–94 (PRYFTWDEVA…MNSLLIGELS (78 aa)). Residues 122–142 (MGLMKANHVFFLLYLLHILLL) form a helical membrane-spanning segment. Topologically, residues 143-145 (DGA) are lumenal. Residues 146–170 (AWLTLWVFGTSFLPFLLCAVLLSAV) traverse the membrane as a helical segment. Residues 171–267 (QAQAGWLQHD…PYNHQHKYFF (97 aa)) lie on the Cytoplasmic side of the membrane. The Histidine box-1 motif lies at 179–183 (HDFGH). Positions 216 to 220 (HFQHH) match the Histidine box-2 motif. A helical transmembrane segment spans residues 268-288 (LIGPPALLPLYFQWYIFYFVI). At 289–305 (QRKKWVDLAWMITFYVR) the chain is on the lumenal side. A helical membrane pass occupies residues 306–326 (FFLTYVPLLGLKAFLGLFFIV). Over 327-444 (RFLESNWFVW…QLWLDAYLHQ (118 aa)) the chain is Cytoplasmic. The Histidine box-3 motif lies at 382-386 (QIEHH).

The protein belongs to the fatty acid desaturase type 1 family. In terms of tissue distribution, widely expressed, with highest levels in liver, brain, adrenal gland and heart. Highly expressed in fetal liver and brain.

The protein localises to the endoplasmic reticulum membrane. The protein resides in the mitochondrion. The enzyme catalyses (8Z,11Z,14Z)-eicosatrienoyl-CoA + 2 Fe(II)-[cytochrome b5] + O2 + 2 H(+) = (5Z,8Z,11Z,14Z)-eicosatetraenoyl-CoA + 2 Fe(III)-[cytochrome b5] + 2 H2O. It catalyses the reaction (8Z,11Z,14Z,17Z)-eicosatetraenoyl-CoA + 2 Fe(II)-[cytochrome b5] + O2 + 2 H(+) = (5Z,8Z,11Z,14Z,17Z)-eicosapentaenoyl-CoA + 2 Fe(III)-[cytochrome b5] + 2 H2O. It carries out the reaction (11E)-octadecenoyl-CoA + 2 Fe(II)-[cytochrome b5] + O2 + 2 H(+) = (5Z,11E)-octadecadienoyl-CoA + 2 Fe(III)-[cytochrome b5] + 2 H2O. Its pathway is lipid metabolism; polyunsaturated fatty acid biosynthesis. Acts as a front-end fatty acyl-coenzyme A (CoA) desaturase that introduces a cis double bond at carbon 5 located between a preexisting double bond and the carboxyl end of the fatty acyl chain. Involved in biosynthesis of highly unsaturated fatty acids (HUFA) from the essential polyunsaturated fatty acids (PUFA) linoleic acid (LA) (18:2n-6) and alpha-linolenic acid (ALA) (18:3n-3) precursors. Specifically, desaturates dihomo-gamma-linoleoate (DGLA) (20:3n-6) and eicosatetraenoate (ETA) (20:4n-3) to generate arachidonate (AA) (20:4n-6) and eicosapentaenoate (EPA) (20:5n-3), respectively. As a rate limiting enzyme for DGLA (20:3n-6) and AA (20:4n-6)-derived eicosanoid biosynthesis, controls the metabolism of inflammatory lipids like prostaglandin E2, critical for efficient acute inflammatory response and maintenance of epithelium homeostasis. Contributes to membrane phospholipid biosynthesis by providing AA (20:4n-6) as a major acyl chain esterified into phospholipids. In particular, regulates phosphatidylinositol-4,5-bisphosphate levels, modulating inflammatory cytokine production in T-cells. Also desaturates (11E)-octadecenoate (trans-vaccenoate)(18:1n-9), a metabolite in the biohydrogenation pathway of LA (18:2n-6). In terms of biological role, does not exhibit any catalytic activity toward 20:3n-6, but it may enhance FADS2 activity. The protein is Acyl-CoA (8-3)-desaturase of Homo sapiens (Human).